A 404-amino-acid chain; its full sequence is Alkane 1-monooxygenase 1 (404 aa).

Transmembrane regions (helical) follow at residues 25–45 (HLWI…YLVS), 47–67 (TGWS…VPLI), 94–114 (VLTY…AWWV), and 119–139 (IGVF…GLAL). His-143 and His-147 together coordinate Fe cation. The chain crosses the membrane as a helical span at residues 151–171 (TFDRWMAKLVLAVVGYGHFFI). The Fe cation site is built by His-173, His-177, and His-178. Residues 241–261 (VVLYAALLAFFGPLMLIFLPI) traverse the membrane as a helical segment. Fe cation is bound by residues His-317, His-320, and His-321.

It belongs to the fatty acid desaturase type 1 family. AlkB subfamily. Fe(3+) is required as a cofactor.

The protein localises to the cell inner membrane. It carries out the reaction octane + 2 reduced [rubredoxin] + O2 + 2 H(+) = 2 oxidized [rubredoxin] + octan-1-ol + H2O. It participates in hydrocarbon metabolism; alkane degradation. Its function is as follows. Catalyzes the hydroxylation of n-alkanes and fatty acids in the presence of a NADH-rubredoxin reductase and rubredoxin. It preferably hydroxylases C5-C12 hydrocarbons. The sequence is that of Alkane 1-monooxygenase 1 (alkB1) from Alcanivorax borkumensis (strain ATCC 700651 / DSM 11573 / NCIMB 13689 / SK2).